The sequence spans 72 residues: UPF0270 protein PM1156 (72 aa).

It belongs to the UPF0270 family.

In Pasteurella multocida (strain Pm70), this protein is UPF0270 protein PM1156.